The sequence spans 464 residues: Geranylgeranyl diphosphate reductase, chloroplastic (464 aa).

The N-terminal 54 residues, 1-54 (MASIALKTFTGLRQSSPENNSITLSKSLPFTQTHRRLRINASKSSPRVNGRNLR), are a transit peptide targeting the chloroplast.

Belongs to the geranylgeranyl reductase family. ChlP subfamily.

It is found in the plastid. The protein localises to the chloroplast. The enzyme catalyses phytyl diphosphate + 3 NADP(+) = geranylgeranyl diphosphate + 3 NADPH + 3 H(+). The protein operates within porphyrin-containing compound metabolism; chlorophyll biosynthesis. It participates in cofactor biosynthesis; tocopherol biosynthesis. In terms of biological role, catalyzes the reduction of geranylgeranyl diphosphate to phytyl diphosphate, providing phytol for both tocopherol and chlorophyll synthesis. This chain is Geranylgeranyl diphosphate reductase, chloroplastic (CHLP), found in Nicotiana tabacum (Common tobacco).